Here is a 145-residue protein sequence, read N- to C-terminus: Copper transporter 4 (145 aa).

Transmembrane regions (helical) follow at residues 53–73 (GMYA…EWLA) and 106–126 (YLVI…AIFG).

This sequence belongs to the copper transporter (Ctr) (TC 1.A.56) family. SLC31A subfamily. As to expression, highly expressed in roots and at lower levels in leaves, stems and flowers.

It is found in the membrane. Functionally, involved in the transport of copper. The sequence is that of Copper transporter 4 (COPT4) from Arabidopsis thaliana (Mouse-ear cress).